The chain runs to 232 residues: LexA repressor (232 aa).

The H-T-H motif DNA-binding region spans 26–46; the sequence is FDEMKDALDLRSKSGIHRLIT. Catalysis depends on for autocatalytic cleavage activity residues S153 and K191.

This sequence belongs to the peptidase S24 family. Homodimer.

The catalysed reaction is Hydrolysis of Ala-|-Gly bond in repressor LexA.. In terms of biological role, represses a number of genes involved in the response to DNA damage (SOS response), including recA and lexA. In the presence of single-stranded DNA, RecA interacts with LexA causing an autocatalytic cleavage which disrupts the DNA-binding part of LexA, leading to derepression of the SOS regulon and eventually DNA repair. The chain is LexA repressor from Bradyrhizobium sp. (strain ORS 278).